The sequence spans 130 residues: Small ribosomal subunit protein uS9 (130 aa).

The protein belongs to the universal ribosomal protein uS9 family.

This Shewanella sediminis (strain HAW-EB3) protein is Small ribosomal subunit protein uS9.